A 194-amino-acid polypeptide reads, in one-letter code: FMN-dependent NADH:quinone oxidoreductase (194 aa).

FMN-binding positions include Ser9, 15–17 (SIS), and 85–88 (MYNF).

This sequence belongs to the azoreductase type 1 family. Homodimer. The cofactor is FMN.

It catalyses the reaction 2 a quinone + NADH + H(+) = 2 a 1,4-benzosemiquinone + NAD(+). It carries out the reaction N,N-dimethyl-1,4-phenylenediamine + anthranilate + 2 NAD(+) = 2-(4-dimethylaminophenyl)diazenylbenzoate + 2 NADH + 2 H(+). Quinone reductase that provides resistance to thiol-specific stress caused by electrophilic quinones. In terms of biological role, also exhibits azoreductase activity. Catalyzes the reductive cleavage of the azo bond in aromatic azo compounds to the corresponding amines. This Xanthomonas oryzae pv. oryzae (strain MAFF 311018) protein is FMN-dependent NADH:quinone oxidoreductase.